We begin with the raw amino-acid sequence, 248 residues long: Probable phosphatase VF_A0065 (248 aa).

Zn(2+)-binding residues include H8, H10, H16, H41, E74, H102, H132, D194, and H196.

This sequence belongs to the PHP family. Requires Zn(2+) as cofactor.

This Aliivibrio fischeri (strain ATCC 700601 / ES114) (Vibrio fischeri) protein is Probable phosphatase VF_A0065.